The following is a 155-amino-acid chain: Cytochrome c-550 (155 aa).

The first 20 residues, M1–A20, serve as a signal peptide directing secretion. The residue at position 21 (Q21) is a Pyrrolidone carboxylic acid. C35, C38, H39, and M120 together coordinate heme c. The propeptide occupies A150–N155.

Post-translationally, binds 1 heme c group covalently per subunit.

In Paracoccus denitrificans, this protein is Cytochrome c-550 (cycA).